We begin with the raw amino-acid sequence, 131 residues long: Profilin-2 (131 aa).

Cys13 and Cys115 are oxidised to a cystine. Residues 81 to 97 carry the Involved in PIP2 interaction motif; the sequence is AVIRGKKGSGGITVKKT. Residue Thr111 is modified to Phosphothreonine.

The protein belongs to the profilin family. As to quaternary structure, occurs in many kinds of cells as a complex with monomeric actin in a 1:1 ratio. In terms of processing, phosphorylated by MAP kinases. As to expression, pollen specific.

The protein localises to the cytoplasm. The protein resides in the cytoskeleton. Functionally, binds to actin and affects the structure of the cytoskeleton. At high concentrations, profilin prevents the polymerization of actin, whereas it enhances it at low concentrations. By binding to PIP2, it inhibits the formation of IP3 and DG. This chain is Profilin-2 (PRO2), found in Zea mays (Maize).